A 368-amino-acid chain; its full sequence is 1-deoxy-D-xylulose 5-phosphate reductoisomerase (368 aa).

Residues Thr7, Gly8, Ser9, Ile10, Gly31, Lys32, Asn33, and Asn113 each coordinate NADPH. Lys114 contributes to the 1-deoxy-D-xylulose 5-phosphate binding site. Glu115 contributes to the NADPH binding site. Asp133 contacts Mn(2+). The 1-deoxy-D-xylulose 5-phosphate site is built by Ser134, Glu135, Ser158, and His181. Residue Glu135 coordinates Mn(2+). Gly187 is a binding site for NADPH. Residues Ser194, Asn199, Lys200, and Glu203 each coordinate 1-deoxy-D-xylulose 5-phosphate. Glu203 contacts Mn(2+).

Belongs to the DXR family. Requires Mg(2+) as cofactor. It depends on Mn(2+) as a cofactor.

The catalysed reaction is 2-C-methyl-D-erythritol 4-phosphate + NADP(+) = 1-deoxy-D-xylulose 5-phosphate + NADPH + H(+). It participates in isoprenoid biosynthesis; isopentenyl diphosphate biosynthesis via DXP pathway; isopentenyl diphosphate from 1-deoxy-D-xylulose 5-phosphate: step 1/6. Catalyzes the NADPH-dependent rearrangement and reduction of 1-deoxy-D-xylulose-5-phosphate (DXP) to 2-C-methyl-D-erythritol 4-phosphate (MEP). This is 1-deoxy-D-xylulose 5-phosphate reductoisomerase from Helicobacter pylori (strain Shi470).